Consider the following 208-residue polypeptide: Glutathione S-transferase (208 aa).

Residues 1-78 form the GST N-terminal domain; that stretch reads MSYKLTYFPI…HLARKFNLNG (78 aa). Glutathione contacts are provided by residues Tyr-7, Lys-42, 49–50, and 62–63; these read QL and QS. Residues 80–200 form the GST C-terminal domain; it reads NNAETSYVDM…YCAKRNASKM (121 aa).

It belongs to the GST superfamily. Pi family. In terms of assembly, homodimer.

The catalysed reaction is RX + glutathione = an S-substituted glutathione + a halide anion + H(+). Conjugation of reduced glutathione to a wide number of exogenous and endogenous hydrophobic electrophiles. This Dirofilaria immitis (Canine heartworm) protein is Glutathione S-transferase.